Consider the following 214-residue polypeptide: Probable transaldolase (214 aa).

Residue Lys83 is the Schiff-base intermediate with substrate of the active site.

The protein belongs to the transaldolase family. Type 3B subfamily.

It is found in the cytoplasm. It carries out the reaction D-sedoheptulose 7-phosphate + D-glyceraldehyde 3-phosphate = D-erythrose 4-phosphate + beta-D-fructose 6-phosphate. It functions in the pathway carbohydrate degradation; pentose phosphate pathway; D-glyceraldehyde 3-phosphate and beta-D-fructose 6-phosphate from D-ribose 5-phosphate and D-xylulose 5-phosphate (non-oxidative stage): step 2/3. Functionally, transaldolase is important for the balance of metabolites in the pentose-phosphate pathway. The protein is Probable transaldolase of Carboxydothermus hydrogenoformans (strain ATCC BAA-161 / DSM 6008 / Z-2901).